A 504-amino-acid chain; its full sequence is Cytochrome P450 2K1 (504 aa).

C447 contacts heme.

Belongs to the cytochrome P450 family. Heme is required as a cofactor.

The protein localises to the endoplasmic reticulum membrane. It localises to the microsome membrane. It carries out the reaction an organic molecule + reduced [NADPH--hemoprotein reductase] + O2 = an alcohol + oxidized [NADPH--hemoprotein reductase] + H2O + H(+). In Oncorhynchus mykiss (Rainbow trout), this protein is Cytochrome P450 2K1 (cyp2k1).